Reading from the N-terminus, the 728-residue chain is Catalase-peroxidase (728 aa).

An N-terminal signal peptide occupies residues Met1–Ala19. The interval Met1–Gly20 is disordered. A cross-link (tryptophyl-tyrosyl-methioninium (Trp-Tyr) (with M-245)) is located at residues Trp96–Tyr219. His97 acts as the Proton acceptor in catalysis. The segment at residues Tyr219–Met245 is a cross-link (tryptophyl-tyrosyl-methioninium (Tyr-Met) (with W-96)). Residue His260 coordinates heme b.

It belongs to the peroxidase family. Peroxidase/catalase subfamily. Homodimer or homotetramer. It depends on heme b as a cofactor. Post-translationally, formation of the three residue Trp-Tyr-Met cross-link is important for the catalase, but not the peroxidase activity of the enzyme.

It catalyses the reaction H2O2 + AH2 = A + 2 H2O. The catalysed reaction is 2 H2O2 = O2 + 2 H2O. Bifunctional enzyme with both catalase and broad-spectrum peroxidase activity. In Acidiphilium cryptum (strain JF-5), this protein is Catalase-peroxidase.